A 386-amino-acid chain; its full sequence is CRISPR system endoribonuclease Csm6' (386 aa).

The tract at residues 1–146 (MRVLISAVGD…ASNENIGHDN (146 aa)) is CARF domain. The segment at 147-386 (DENIDELIEV…LNKILLTKLN (240 aa)) is HEPN domain.

This sequence belongs to the CRISPR-associated Csm6 family. Homodimer. The composite ssRNase active site is formed at the dimer interface.

With respect to regulation, non-specific ssRNase activity is stimulated about 1000-fold by cyclic oligoadenylate (cOA), a second messenger produced by Cas10 of the ternary Csm effector complex in the presence of a cognate target RNA. CRISPR (clustered regularly interspaced short palindromic repeat) is an adaptive immune system that provides protection against mobile genetic elements (viruses, transposable elements and conjugative plasmids). CRISPR clusters contain spacers, sequences complementary to antecedent mobile elements, and target invading nucleic acids. CRISPR clusters are transcribed and processed into CRISPR RNA (crRNA). The type III-A Csm complex binds crRNA and acts as a crRNA-guided RNase, DNase and cyclic oligoadenylate synthase; binding of target RNA cognate to the crRNA is required for all activities. In a heterologous host this Csm effector complex restricts ssRNA phage MS2, suggesting it may target RNA viruses in vivo. This protein is not part of the Csm complex. In terms of biological role, csm functions as a non-specific ssDNase. Base-pairing between crRNA and target RNA to form a ternary Csm complex activates a ssDNase activity; target RNA cleavage suppresses the ssDNase, a temporal control that prevents uncontrolled DNA degradation. Viral RNA transcripts probably tether the Csm complex to the viral genome, recruiting Cas10 ssDNA activity which is able to degrade DNA in the transcription bubble, spatially controlling the DNase activity. Its function is as follows. A single-strand-specific endoribonuclease (ssRNase) that is approximately 1000-fold stimulated by cyclic oligoadenylate (cOA); although several species of cOA are synthesized by this organism only cyclic hexaadenylate (cA6) stimulates the ssRNase activity. Cleaves preferentially within GA or AA dinucleotides, although the presence of cA6 broadens the preference. This is CRISPR system endoribonuclease Csm6' from Streptococcus thermophilus.